Here is a 154-residue protein sequence, read N- to C-terminus: Ribonuclease P protein subunit p21 (154 aa).

Residue A2 is modified to N-acetylalanine. Zn(2+)-binding residues include C62, C65, C92, and C95. The interval 117 to 154 (QLGSQADSKPLQPLPNTAHSISDRLPEEKMQTQGSSNQ) is disordered. Residues 137 to 146 (ISDRLPEEKM) are compositionally biased toward basic and acidic residues.

This sequence belongs to the eukaryotic/archaeal RNase P protein component 4 family. RNase P consists of a catalytic RNA moiety and about 10 protein subunits; POP1, POP4, POP5, POP7, RPP14, RPP21, RPP25, RPP30, RPP38 and RPP40. Within the RNase P complex, POP1, POP7 and RPP25 form the 'finger' subcomplex, POP5, RPP14, RPP40 and homodimeric RPP30 form the 'palm' subcomplex, and RPP21, POP4 and RPP38 form the 'wrist' subcomplex. All subunits of the RNase P complex interact with the catalytic RNA.

It is found in the nucleus. Its subcellular location is the nucleolus. Component of ribonuclease P, a ribonucleoprotein complex that generates mature tRNA molecules by cleaving their 5'-ends. This is Ribonuclease P protein subunit p21 (RPP21) from Homo sapiens (Human).